A 408-amino-acid chain; its full sequence is MVQVNSNYLKLKAGYLFPEIARRIKSFSEANPDAALIRLGIGDVTEPLPLACRNAMKVAIDEMGTNTGFHGYGPEQGYDWLREAIAKHDFQNKGCQINAEEIFVSDGSKCDSSNILDILGSSNRIAVTDPVYPVYVDSNVMAGRTGEANQSGRYAGLSYLPINAENGFAAKIPSEPVDLIYLCFPNNPTGAVATRAQLQEWVNYARTNSVLILFDAAYEAFIQNPDLPHSIYEIEGARECAIEFRSFSKNAGFTGTRCAFTVVPKGLKGKSDDGSDVELWNLWNRRQSTKFNGVSYIIQRGAEAVYSAQGQGEINALVSFYMRNAAIIRRELTAAGIEVHGGEHAPYVWLKTPDDMDSWGFFDHLLHNANVVGTPGSGFGAAGEGYFRLSAFNSRVNVDEAMRRIRAL.

Substrate is bound by residues tyrosine 15 and glycine 42. Pyridoxal 5'-phosphate-binding positions include tyrosine 72, 108 to 109 (SK), tyrosine 132, asparagine 187, tyrosine 218, and 246 to 248 (SFS). The substrate site is built by lysine 109, tyrosine 132, and asparagine 187. Residue lysine 249 is modified to N6-(pyridoxal phosphate)lysine. Residues arginine 257 and asparagine 292 each coordinate pyridoxal 5'-phosphate. Asparagine 292 and arginine 388 together coordinate substrate.

Belongs to the class-I pyridoxal-phosphate-dependent aminotransferase family. LL-diaminopimelate aminotransferase subfamily. As to quaternary structure, homodimer. The cofactor is pyridoxal 5'-phosphate.

It catalyses the reaction (2S,6S)-2,6-diaminopimelate + 2-oxoglutarate = (S)-2,3,4,5-tetrahydrodipicolinate + L-glutamate + H2O + H(+). The protein operates within amino-acid biosynthesis; L-lysine biosynthesis via DAP pathway; LL-2,6-diaminopimelate from (S)-tetrahydrodipicolinate (aminotransferase route): step 1/1. Its function is as follows. Involved in the synthesis of meso-diaminopimelate (m-DAP or DL-DAP), required for both lysine and peptidoglycan biosynthesis. Catalyzes the direct conversion of tetrahydrodipicolinate to LL-diaminopimelate. The protein is LL-diaminopimelate aminotransferase of Prochlorococcus marinus (strain MIT 9303).